A 523-amino-acid chain; its full sequence is Vanin-like protein 3 (523 aa).

Positions methionine 1–threonine 19 are cleaved as a signal peptide. Positions tyrosine 29–leucine 298 constitute a CN hydrolase domain. An N-linked (GlcNAc...) asparagine glycan is attached at asparagine 64. Glutamate 74 functions as the Proton acceptor in the catalytic mechanism. Residue lysine 167 is the Proton donor of the active site. 2 N-linked (GlcNAc...) asparagine glycosylation sites follow: asparagine 177 and asparagine 192. Cysteine 200 serves as the catalytic Nucleophile. N-linked (GlcNAc...) asparagine glycans are attached at residues asparagine 330 and asparagine 468. Asparagine 498 is lipidated: GPI-anchor amidated asparagine. The propeptide at glycine 499–glutamate 523 is removed in mature form.

Belongs to the carbon-nitrogen hydrolase superfamily. BTD/VNN family. Expressed in third instar larvae.

It localises to the cell membrane. This is Vanin-like protein 3 from Drosophila melanogaster (Fruit fly).